The sequence spans 314 residues: uncharacterized protein (314 aa).

Residues 1 to 70 (MAGNSQRRGA…QGRHKKTDDT (70 aa)) are disordered. Residues 43-65 (QRPHHPAGKRAAKAARQAQGRHK) are compositionally biased toward basic residues. Residues Gly-265, Ile-285, and Leu-294 each coordinate S-adenosyl-L-methionine.

It belongs to the class IV-like SAM-binding methyltransferase superfamily. RNA methyltransferase TrmH family.

This is an uncharacterized protein from Mycolicibacterium vanbaalenii (strain DSM 7251 / JCM 13017 / BCRC 16820 / KCTC 9966 / NRRL B-24157 / PYR-1) (Mycobacterium vanbaalenii).